We begin with the raw amino-acid sequence, 96 residues long: Large ribosomal subunit protein eL21 (96 aa).

A disordered region spans residues 1-66 (MPSSNGPLEG…FDGQTGTVEG (66 aa)).

It belongs to the eukaryotic ribosomal protein eL21 family. Part of the 50S ribosomal subunit. Interacts with protein L18 and binds the 5S rRNA. Has been cross-linked to L18.

Functionally, this is one of 5 proteins that mediate the attachment of the 5S rRNA onto the large ribosomal subunit, stabilizing the orientation of adjacent RNA domains. In Haloarcula marismortui (strain ATCC 43049 / DSM 3752 / JCM 8966 / VKM B-1809) (Halobacterium marismortui), this protein is Large ribosomal subunit protein eL21 (rpl21e).